A 463-amino-acid polypeptide reads, in one-letter code: Glutamate--tRNA ligase 1 (463 aa).

The 'HIGH' region motif lies at 10–20 (PSPTGFLHIGS). Positions 239-243 (KLSKR) match the 'KMSKS' region motif. Lys242 lines the ATP pocket.

This sequence belongs to the class-I aminoacyl-tRNA synthetase family. Glutamate--tRNA ligase type 1 subfamily. As to quaternary structure, monomer.

The protein localises to the cytoplasm. The catalysed reaction is tRNA(Glu) + L-glutamate + ATP = L-glutamyl-tRNA(Glu) + AMP + diphosphate. Its function is as follows. Catalyzes the attachment of glutamate to tRNA(Glu) in a two-step reaction: glutamate is first activated by ATP to form Glu-AMP and then transferred to the acceptor end of tRNA(Glu). The chain is Glutamate--tRNA ligase 1 from Rickettsia canadensis (strain McKiel).